The sequence spans 162 residues: UPF0114 protein Sfri_3655 (162 aa).

3 consecutive transmembrane segments (helical) span residues 15–35 (IMAP…IKFF), 53–73 (LVLI…LIMV), and 136–156 (IMWY…MGYL).

It belongs to the UPF0114 family.

The protein localises to the cell membrane. This chain is UPF0114 protein Sfri_3655, found in Shewanella frigidimarina (strain NCIMB 400).